A 369-amino-acid polypeptide reads, in one-letter code: tRNA-specific 2-thiouridylase MnmA (369 aa).

Residues 10 to 17 (GLSGGVDS) and leucine 36 contribute to the ATP site. The Nucleophile role is filled by cysteine 97. A disulfide bond links cysteine 97 and cysteine 196. Glycine 122 lines the ATP pocket. Residues 146–148 (KDQ) form an interaction with tRNA region. The Cysteine persulfide intermediate role is filled by cysteine 196. Residues 301–302 (RY) form an interaction with tRNA region.

This sequence belongs to the MnmA/TRMU family.

The protein localises to the cytoplasm. It catalyses the reaction S-sulfanyl-L-cysteinyl-[protein] + uridine(34) in tRNA + AH2 + ATP = 2-thiouridine(34) in tRNA + L-cysteinyl-[protein] + A + AMP + diphosphate + H(+). In terms of biological role, catalyzes the 2-thiolation of uridine at the wobble position (U34) of tRNA, leading to the formation of s(2)U34. This Thermosynechococcus vestitus (strain NIES-2133 / IAM M-273 / BP-1) protein is tRNA-specific 2-thiouridylase MnmA.